The following is a 352-amino-acid chain: Rhodopsin (352 aa).

Topologically, residues 1–36 (MNGTEGPFFYIPMVNTTGVVRSPYEYPQYYLVNPAA) are extracellular. N-linked (GlcNAc...) asparagine glycosylation is found at Asn2 and Asn15. A helical membrane pass occupies residues 37-61 (YACLGAYMFFLILVGFPVNFLTLYV). Residues 62–73 (TLEHKKLRTPLN) lie on the Cytoplasmic side of the membrane. The helical transmembrane segment at 74-96 (YILLNLAVADLFMVFGGFTTTIY) threads the bilayer. The Extracellular segment spans residues 97–110 (TSMHGYFVLGRLGC). A disulfide bridge connects residues Cys110 and Cys187. Residues 111–133 (NIEGFFATLGGEIALWSLVVLAI) traverse the membrane as a helical segment. The 'Ionic lock' involved in activated form stabilization signature appears at 134–136 (ERW). At 134 to 152 (ERWVVVCKPISNFRFGENH) the chain is on the cytoplasmic side. Residues 153–173 (AIMGVAFTWFMASACAVPPLV) form a helical membrane-spanning segment. Residues 174-202 (GWSRYIPEGMQCSCGIDYYTRAEGFNNES) are Extracellular-facing. N-linked (GlcNAc...) asparagine glycosylation occurs at Asn200. The chain crosses the membrane as a helical span at residues 203 to 224 (FVIYMFTVHFCIPLAVVGFCYG). Residues 225–252 (RLLCAVKEAAAAQQESETTQRAEREVSR) lie on the Cytoplasmic side of the membrane. Residues 253–274 (MVVIMVIGFLVCWLPYASVAWY) form a helical membrane-spanning segment. Topologically, residues 275 to 286 (IFTHQGSEFGPL) are extracellular. The helical transmembrane segment at 287–308 (FMTIPAFFAKSSSIYNPMIYIC) threads the bilayer. The residue at position 296 (Lys296) is an N6-(retinylidene)lysine. At 309 to 352 (MNKQFRHCMITTLCCGKNPFEEEEGASTTKTEASSVSSSSVSPA) the chain is on the cytoplasmic side. S-palmitoyl cysteine attachment occurs at residues Cys322 and Cys323. The disordered stretch occupies residues 331–352 (EEGASTTKTEASSVSSSSVSPA). Positions 342–352 (SSVSSSSVSPA) are enriched in low complexity.

It belongs to the G-protein coupled receptor 1 family. Opsin subfamily. Phosphorylated on some or all of the serine and threonine residues present in the C-terminal region. Post-translationally, contains one covalently linked retinal chromophore.

It is found in the membrane. It localises to the cell projection. The protein resides in the cilium. The protein localises to the photoreceptor outer segment. Its function is as follows. Photoreceptor required for image-forming vision at low light intensity. While most salt water fish species use retinal as chromophore, most freshwater fish use 3-dehydroretinal, or a mixture of retinal and 3-dehydroretinal. Light-induced isomerization of 11-cis to all-trans retinal triggers a conformational change that activates signaling via G-proteins. Subsequent receptor phosphorylation mediates displacement of the bound G-protein alpha subunit by arrestin and terminates signaling. The sequence is that of Rhodopsin (rho) from Gobius niger (Black goby).